The chain runs to 341 residues: Ribosomal RNA small subunit methyltransferase H (341 aa).

S-adenosyl-L-methionine contacts are provided by residues 47–49 (GGY), aspartate 64, phenylalanine 97, aspartate 109, and glutamine 116.

This sequence belongs to the methyltransferase superfamily. RsmH family.

The protein resides in the cytoplasm. The catalysed reaction is cytidine(1402) in 16S rRNA + S-adenosyl-L-methionine = N(4)-methylcytidine(1402) in 16S rRNA + S-adenosyl-L-homocysteine + H(+). In terms of biological role, specifically methylates the N4 position of cytidine in position 1402 (C1402) of 16S rRNA. The protein is Ribosomal RNA small subunit methyltransferase H of Allorhizobium ampelinum (strain ATCC BAA-846 / DSM 112012 / S4) (Agrobacterium vitis (strain S4)).